Consider the following 590-residue polypeptide: MLRSHAAGSLRPADAGQNVTLAGWVARRRDHGGVIFIDLRDASGVSQVVFREGAVLEAAHRLRAEFCVAVEGVVEVRPEGNENPEIPTGGIEVNATSLTVLGESAPLPFQLDDEAGEEARLKYRYLDLRREGPGKALRLRSKVNAAAREVLARHDFVEIETPTMTRSTPEGARDFLVPARLQPGSFYALPQSPQLFKQLLMVAGMERYYQIARCYRDEDFRADRQPEFTQLDMEMSFVDADDVIAVSEEILKALWALIGHDLPTPLPRITYAEAMRRFGTDKPDLRFGLELVECKEFFADTTFRVFQAPYVGAVVMPGGASQPRRTLDGWQEWAKQRGAKGLAYVLVGDDGTLGGPVAKNLTDAERDGLAAHVGANPGDCIFFAAGPPKSSRALLGAARIEIAKRLDMIDPDAWAFTWVVDWPLFEMAEDATAAGDVAVGSGAWTAVHHAFTAPQPQSEATFDTDPAGALADAYDIVCNGNEIGGGSIRIHRRDVQERVFAMMGIEHDEAQEKFGFLLDAFTFGAPPHGGIAFGWDRITALLARMDSIREVIAFPKSGGGADPLTGAPAPITPQQRRESGIDAKPKKDGE.

Glutamate 170 serves as a coordination point for L-aspartate. Residues 194-197 (QLFK) are aspartate. Residue arginine 216 participates in L-aspartate binding. Residues 216 to 218 (RDE) and glutamine 225 each bind ATP. Histidine 448 lines the L-aspartate pocket. ATP is bound at residue glutamate 482. Arginine 489 is an L-aspartate binding site. 534–537 (GWDR) contributes to the ATP binding site. Residues 557-590 (SGGGADPLTGAPAPITPQQRRESGIDAKPKKDGE) form a disordered region. A compositionally biased stretch (basic and acidic residues) spans 575–590 (QRRESGIDAKPKKDGE).

Belongs to the class-II aminoacyl-tRNA synthetase family. Type 1 subfamily. As to quaternary structure, homodimer.

The protein resides in the cytoplasm. The catalysed reaction is tRNA(Asx) + L-aspartate + ATP = L-aspartyl-tRNA(Asx) + AMP + diphosphate. Functionally, aspartyl-tRNA synthetase with relaxed tRNA specificity since it is able to aspartylate not only its cognate tRNA(Asp) but also tRNA(Asn). Reaction proceeds in two steps: L-aspartate is first activated by ATP to form Asp-AMP and then transferred to the acceptor end of tRNA(Asp/Asn). The polypeptide is Aspartate--tRNA(Asp/Asn) ligase (Mycobacterium sp. (strain JLS)).